Consider the following 49-residue polypeptide: Large ribosomal subunit protein bL33A (49 aa).

The protein belongs to the bacterial ribosomal protein bL33 family.

The polypeptide is Large ribosomal subunit protein bL33A (Staphylococcus haemolyticus (strain JCSC1435)).